Consider the following 450-residue polypeptide: 3-phosphoshikimate 1-carboxyvinyltransferase (450 aa).

The interval 1–25 (MSAHGDPKPMTARKGGALTGTAEVP) is disordered. 3-phosphoshikimate is bound by residues Lys-28, Ser-29, and Arg-33. Position 28 (Lys-28) interacts with phosphoenolpyruvate. Positions 101 and 129 each coordinate phosphoenolpyruvate. 3-phosphoshikimate-binding residues include Ser-174, Gln-176, Asp-327, and Lys-354. Gln-176 serves as a coordination point for phosphoenolpyruvate. The active-site Proton acceptor is the Asp-327. Phosphoenolpyruvate-binding residues include Arg-358 and Arg-403.

Belongs to the EPSP synthase family. As to quaternary structure, monomer.

It is found in the cytoplasm. The catalysed reaction is 3-phosphoshikimate + phosphoenolpyruvate = 5-O-(1-carboxyvinyl)-3-phosphoshikimate + phosphate. The protein operates within metabolic intermediate biosynthesis; chorismate biosynthesis; chorismate from D-erythrose 4-phosphate and phosphoenolpyruvate: step 6/7. Its function is as follows. Catalyzes the transfer of the enolpyruvyl moiety of phosphoenolpyruvate (PEP) to the 5-hydroxyl of shikimate-3-phosphate (S3P) to produce enolpyruvyl shikimate-3-phosphate and inorganic phosphate. The sequence is that of 3-phosphoshikimate 1-carboxyvinyltransferase from Jannaschia sp. (strain CCS1).